A 76-amino-acid chain; its full sequence is Exodeoxyribonuclease 7 small subunit (76 aa).

The protein belongs to the XseB family. Heterooligomer composed of large and small subunits.

The protein localises to the cytoplasm. The catalysed reaction is Exonucleolytic cleavage in either 5'- to 3'- or 3'- to 5'-direction to yield nucleoside 5'-phosphates.. Bidirectionally degrades single-stranded DNA into large acid-insoluble oligonucleotides, which are then degraded further into small acid-soluble oligonucleotides. This chain is Exodeoxyribonuclease 7 small subunit, found in Geobacter sulfurreducens (strain ATCC 51573 / DSM 12127 / PCA).